The following is a 66-amino-acid chain: Xenoxin-3 (66 aa).

Intrachain disulfides connect Cys-3–Cys-24, Cys-17–Cys-37, Cys-43–Cys-58, and Cys-59–Cys-64.

Expressed by the skin dorsal glands.

Its subcellular location is the secreted. Lacks alpha-neurotoxic activity, has apparently no antibacterial activity, nor anti-coagulant potency. In Xenopus laevis (African clawed frog), this protein is Xenoxin-3.